The following is a 110-amino-acid chain: Ribonuclease P protein component (110 aa).

Belongs to the RnpA family. Consists of a catalytic RNA component (M1 or rnpB) and a protein subunit.

The enzyme catalyses Endonucleolytic cleavage of RNA, removing 5'-extranucleotides from tRNA precursor.. RNaseP catalyzes the removal of the 5'-leader sequence from pre-tRNA to produce the mature 5'-terminus. It can also cleave other RNA substrates such as 4.5S RNA. The protein component plays an auxiliary but essential role in vivo by binding to the 5'-leader sequence and broadening the substrate specificity of the ribozyme. The sequence is that of Ribonuclease P protein component from Mesorhizobium japonicum (strain LMG 29417 / CECT 9101 / MAFF 303099) (Mesorhizobium loti (strain MAFF 303099)).